The chain runs to 306 residues: MELKDYYAIMGVKPTDDLKTIKTAYRRLARKYHPDVSKEPDAEARFKEVAEAWEVLSDEQRRAEYDQLWQHRNDPQFNRQFQQGEGQSYNAEDFDDIFSSIFGQHGQQSRQRQATRGHDIEIEVAVFLEETLAEHSRTISYNLPVYNAFGLVEREIPKTLNVKIPAGVGNGQRIRLKGQGTPGENGGPNGDLWLVIHIAPHPLFDIVNQDLEIVVPLAPWEAALGAKVAVPTLKEKILLTIPPGSQAGQRLRIRGKGLVSKKHTGDLYAVIKIVMPPKPDDSATALWQQLADAQSSFDPRKEWGKA.

A J domain is found at 5–69 (DYYAIMGVKP…QRRAEYDQLW (65 aa)).

It localises to the cytoplasm. The protein resides in the nucleoid. Its function is as follows. DNA-binding protein that preferentially recognizes a curved DNA sequence. It is probably a functional analog of DnaJ; displays overlapping activities with DnaJ, but functions under different conditions, probably acting as a molecular chaperone in an adaptive response to environmental stresses other than heat shock. Lacks autonomous chaperone activity; binds native substrates and targets them for recognition by DnaK. Its activity is inhibited by the binding of CbpM. The polypeptide is Curved DNA-binding protein (Citrobacter koseri (strain ATCC BAA-895 / CDC 4225-83 / SGSC4696)).